The following is a 193-amino-acid chain: Putative anthranilate synthase component II (193 aa).

Positions 2–193 (KLLIINNHDS…WLAIPPTTNP (192 aa)) constitute a Glutamine amidotransferase type-1 domain. Active-site residues include C78, H168, and E170.

In terms of assembly, tetramer of two components I and two components II.

The enzyme catalyses chorismate + L-glutamine = anthranilate + pyruvate + L-glutamate + H(+). It functions in the pathway amino-acid biosynthesis; L-tryptophan biosynthesis; L-tryptophan from chorismate: step 1/5. This Haemophilus influenzae (strain ATCC 51907 / DSM 11121 / KW20 / Rd) protein is Putative anthranilate synthase component II.